Consider the following 201-residue polypeptide: Ras-related protein Rab-35 (201 aa).

The GTP site is built by G18, V19, G20, K21, S22, S23, S34, G35, Y37, T39, and T40. S22 serves as a coordination point for Mg(2+). The Switch 1 motif lies at 30-42 (DNTFSGSYITTIG). Mg(2+)-binding residues include T40 and D63. Positions 64 to 80 (TAGQERFRTITSTYYRG) match the Switch 2 motif. G66 contacts GTP. The residue at position 72 (T72) is a Phosphothreonine; by LRRK2. S75 carries the O-(2-cholinephosphoryl)serine modification. Position 77 is an O-AMP-tyrosine (Y77). Residues N120, K121, D123, A151, and K152 each contribute to the GTP site. S-geranylgeranyl cysteine attachment occurs at residues C200 and C201.

It belongs to the small GTPase superfamily. Rab family. In terms of assembly, interacts with DENND1A and DENND1B; in a nucleotide-dependent manner. Interacts with DENND1C; weak interaction which is nucleotide-independent. Interacts (GTP-bound form) with ACAP2, RUSC2, OCRL MICAL1 and MICALL1; the interaction is direct and probably recruits these effectors to membranes. Interacts with EHD1; the interaction is indirect through MICALL1 and probably recruits EHD1 to membranes. Interacts with GDI1, GDI2, CHM and CHML; phosphorylation at Thr-72 by LRRK2 disrupts these interactions. Mg(2+) is required as a cofactor. Phosphorylation at Thr-72 by LRRK2 prevents the association of regulatory proteins including CHM, CHML and GDP dissociation inhibitors GDI1 and GDI2. In terms of processing, AMPylation at Tyr-77 by L.pneumophila DrrA occurs in the switch 2 region and leads to moderate inactivation of the GTPase activity. It appears to prolong the lifetime of the GTP state of RAB1B by restricting access of GTPase effectors to switch 2 and blocking effector-stimulated GTP hydrolysis, thereby rendering RAB35 constitutively active. Post-translationally, phosphocholinated by L.pneumophila AnkX. Both GDP-bound and GTP-bound forms can be phosphocholinated. Phosphocholination inhibits the GEF activity of DENND1A.

Its subcellular location is the cell membrane. The protein localises to the membrane. It localises to the clathrin-coated pit. It is found in the cytoplasmic vesicle. The protein resides in the clathrin-coated vesicle. Its subcellular location is the endosome. The protein localises to the melanosome. It catalyses the reaction GTP + H2O = GDP + phosphate + H(+). Regulated by guanine nucleotide exchange factors (GEFs) including DENND1A, DENND1B and DENND1C which promote the exchange of bound GDP for free GTP. Regulated by GTPase activating proteins (GAPs) including TBC1D10 and TBC1D13 which increase GTP hydrolysis activity. Inhibited by GDP dissociation inhibitors (GDIs) which prevent Rab-GDP dissociation. Its function is as follows. The small GTPases Rab are key regulators of intracellular membrane trafficking, from the formation of transport vesicles to their fusion with membranes. Rabs cycle between an inactive GDP-bound form and an active GTP-bound form that is able to recruit to membranes different sets of downstream effectors directly responsible for vesicle formation, movement, tethering and fusion. RAB35 is involved in the process of endocytosis and is an essential rate-limiting regulator of the fast recycling pathway back to the plasma membrane. During cytokinesis, required for the postfurrowing terminal steps, namely for intercellular bridge stability and abscission, possibly by controlling phosphatidylinositol 4,5-bis phosphate (PIP2) and SEPT2 localization at the intercellular bridge. May indirectly regulate neurite outgrowth. Together with TBC1D13 may be involved in regulation of insulin-induced glucose transporter SLC2A4/GLUT4 translocation to the plasma membrane in adipocytes. The polypeptide is Ras-related protein Rab-35 (Homo sapiens (Human)).